The chain runs to 231 residues: uncharacterized protein (231 aa).

Valine 10 to valine 34 is an NADP(+) binding site. A substrate-binding site is contributed by serine 140. The active-site Proton acceptor is the tyrosine 153.

The protein belongs to the short-chain dehydrogenases/reductases (SDR) family.

This is an uncharacterized protein from Staphylococcus aureus (strain MRSA252).